The chain runs to 350 residues: Nicotinate-nucleotide--dimethylbenzimidazole phosphoribosyltransferase (350 aa).

The Proton acceptor role is filled by E316.

Belongs to the CobT family.

It carries out the reaction 5,6-dimethylbenzimidazole + nicotinate beta-D-ribonucleotide = alpha-ribazole 5'-phosphate + nicotinate + H(+). It functions in the pathway nucleoside biosynthesis; alpha-ribazole biosynthesis; alpha-ribazole from 5,6-dimethylbenzimidazole: step 1/2. In terms of biological role, catalyzes the synthesis of alpha-ribazole-5'-phosphate from nicotinate mononucleotide (NAMN) and 5,6-dimethylbenzimidazole (DMB). In Bradyrhizobium diazoefficiens (strain JCM 10833 / BCRC 13528 / IAM 13628 / NBRC 14792 / USDA 110), this protein is Nicotinate-nucleotide--dimethylbenzimidazole phosphoribosyltransferase.